Here is a 151-residue protein sequence, read N- to C-terminus: Methylated-DNA--protein-cysteine methyltransferase (151 aa).

The active-site Nucleophile; methyl group acceptor is the C119.

It belongs to the MGMT family.

Its subcellular location is the cytoplasm. The enzyme catalyses a 6-O-methyl-2'-deoxyguanosine in DNA + L-cysteinyl-[protein] = S-methyl-L-cysteinyl-[protein] + a 2'-deoxyguanosine in DNA. The catalysed reaction is a 4-O-methyl-thymidine in DNA + L-cysteinyl-[protein] = a thymidine in DNA + S-methyl-L-cysteinyl-[protein]. In terms of biological role, involved in the cellular defense against the biological effects of O6-methylguanine (O6-MeG) and O4-methylthymine (O4-MeT) in DNA. Repairs the methylated nucleobase in DNA by stoichiometrically transferring the methyl group to a cysteine residue in the enzyme. This is a suicide reaction: the enzyme is irreversibly inactivated. The protein is Methylated-DNA--protein-cysteine methyltransferase of Saccharolobus islandicus (strain M.16.27) (Sulfolobus islandicus).